The primary structure comprises 166 residues: RNA pyrophosphohydrolase (166 aa).

A Nudix hydrolase domain is found at 8–158; it reads PYRSCVGMML…KRPVYERVVK (151 aa). The Nudix box motif lies at 47–68; it reads GGIDPGEDYWEAAQRELLEETN.

The protein belongs to the Nudix hydrolase family. RppH subfamily. The cofactor is a divalent metal cation.

In terms of biological role, accelerates the degradation of transcripts by removing pyrophosphate from the 5'-end of triphosphorylated RNA, leading to a more labile monophosphorylated state that can stimulate subsequent ribonuclease cleavage. In Afipia carboxidovorans (strain ATCC 49405 / DSM 1227 / KCTC 32145 / OM5) (Oligotropha carboxidovorans), this protein is RNA pyrophosphohydrolase.